A 196-amino-acid polypeptide reads, in one-letter code: Large ribosomal subunit protein bL9 (196 aa).

This sequence belongs to the bacterial ribosomal protein bL9 family.

Functionally, binds to the 23S rRNA. The protein is Large ribosomal subunit protein bL9 of Rhodopseudomonas palustris (strain HaA2).